A 51-amino-acid chain; its full sequence is VAPPQHLCGSHLVDALYLVCGDRGFFYNPKGIVEQCCHRPCNIFDLQNYCN.

3 cysteine pairs are disulfide-bonded: Cys8–Cys37, Cys20–Cys50, and Cys36–Cys41.

The protein belongs to the insulin family. As to quaternary structure, heterodimer of a B chain and an A chain linked by two disulfide bonds.

It localises to the secreted. Its function is as follows. Insulin decreases blood glucose concentration. It increases cell permeability to monosaccharides, amino acids and fatty acids. It accelerates glycolysis, the pentose phosphate cycle, and glycogen synthesis in liver. In Pagrus major (Red sea bream), this protein is Insulin.